The chain runs to 122 residues: Small ribosomal subunit protein bS16 (122 aa).

Residues 87 to 122 (VGKAKQAEARKAGAKNVAKQAAEAKAEETPADNTEA) form a disordered region.

It belongs to the bacterial ribosomal protein bS16 family.

In Prochlorococcus marinus (strain MIT 9303), this protein is Small ribosomal subunit protein bS16.